Consider the following 287-residue polypeptide: Ventral anterior homeobox 1b (287 aa).

Positions 1–33 are enriched in basic and acidic residues; that stretch reads MFEKTRDMDVRCNIEENGRISKPKDNKEIRESQ. The disordered stretch occupies residues 1–55; the sequence is MFEKTRDMDVRCNIEENGRISKPKDNKEIRESQSKMPSTYPAPGSSEGCAKNKSS. Positions 89 to 148 form a DNA-binding region, homeobox; it reads PKRTRTSFTAEQLYRLEMEFQRCQYVVGRERTELARQLNLSETQVKVWFQNRRTKQKKDQ.

It belongs to the EMX homeobox family.

The protein localises to the nucleus. In terms of biological role, involved in ventral eye development. In Xenopus laevis (African clawed frog), this protein is Ventral anterior homeobox 1b (vax1-b).